Consider the following 325-residue polypeptide: GMP reductase (325 aa).

Catalysis depends on cysteine 174, which acts as the Thioimidate intermediate. 203–226 is a binding site for NADP(+); that stretch reads LIADGGIRTHGDIAKSIRFGATMV.

Belongs to the IMPDH/GMPR family. GuaC type 2 subfamily.

It carries out the reaction IMP + NH4(+) + NADP(+) = GMP + NADPH + 2 H(+). Functionally, catalyzes the irreversible NADPH-dependent deamination of GMP to IMP. It functions in the conversion of nucleobase, nucleoside and nucleotide derivatives of G to A nucleotides, and in maintaining the intracellular balance of A and G nucleotides. This chain is GMP reductase, found in Pediococcus pentosaceus (strain ATCC 25745 / CCUG 21536 / LMG 10740 / 183-1w).